The chain runs to 883 residues: Translation initiation factor IF-2 (883 aa).

The segment at 118-261 (VARESEAAPA…KKKEAFKKTE (144 aa)) is disordered. A compositionally biased stretch (low complexity) spans 124-150 (AAPAEEPVAAAVKPASEPPVVQKAPVA). Composition is skewed to basic and acidic residues over residues 183–200 (PADR…EERI) and 252–261 (KKKEAFKKTE). One can recognise a tr-type G domain in the interval 383–552 (KRPPVVTIMG…LLQADVMDLK (170 aa)). A G1 region spans residues 392-399 (GHVDHGKT). 392–399 (GHVDHGKT) is a GTP binding site. The segment at 417–421 (GITQH) is G2. A G3 region spans residues 438-441 (DTPG). Residues 438 to 442 (DTPGH) and 492 to 495 (NKID) contribute to the GTP site. The segment at 492 to 495 (NKID) is G4. Residues 528 to 530 (SAK) form a G5 region.

The protein belongs to the TRAFAC class translation factor GTPase superfamily. Classic translation factor GTPase family. IF-2 subfamily.

Its subcellular location is the cytoplasm. In terms of biological role, one of the essential components for the initiation of protein synthesis. Protects formylmethionyl-tRNA from spontaneous hydrolysis and promotes its binding to the 30S ribosomal subunits. Also involved in the hydrolysis of GTP during the formation of the 70S ribosomal complex. This chain is Translation initiation factor IF-2, found in Geobacter sulfurreducens (strain ATCC 51573 / DSM 12127 / PCA).